We begin with the raw amino-acid sequence, 200 residues long: Glycerol-3-phosphate acyltransferase (200 aa).

6 helical membrane-spanning segments follow: residues 9–29 (IIIG…AYFW), 54–74 (VPGM…VLLA), 81–101 (DIAV…PLWL), 112–132 (GAGA…LVWL), 140–160 (YVSL…ALLN), and 165–185 (YLIF…SNIG).

It belongs to the PlsY family. As to quaternary structure, probably interacts with PlsX.

Its subcellular location is the cell membrane. It carries out the reaction an acyl phosphate + sn-glycerol 3-phosphate = a 1-acyl-sn-glycero-3-phosphate + phosphate. It functions in the pathway lipid metabolism; phospholipid metabolism. Functionally, catalyzes the transfer of an acyl group from acyl-phosphate (acyl-PO(4)) to glycerol-3-phosphate (G3P) to form lysophosphatidic acid (LPA). This enzyme utilizes acyl-phosphate as fatty acyl donor, but not acyl-CoA or acyl-ACP. This is Glycerol-3-phosphate acyltransferase from Desulforamulus reducens (strain ATCC BAA-1160 / DSM 100696 / MI-1) (Desulfotomaculum reducens).